Reading from the N-terminus, the 145-residue chain is Small ribosomal subunit protein bS6 (145 aa).

The span at 113–132 shows a compositional bias: basic and acidic residues; the sequence is ENMKKNERKAPKEPVKKDEE. A disordered region spans residues 113-145; the sequence is ENMKKNERKAPKEPVKKDEEENKESEEEITSEE. A compositionally biased stretch (acidic residues) spans 133–145; sequence ENKESEEEITSEE.

This sequence belongs to the bacterial ribosomal protein bS6 family.

Its function is as follows. Binds together with bS18 to 16S ribosomal RNA. In Campylobacter hominis (strain ATCC BAA-381 / DSM 21671 / CCUG 45161 / LMG 19568 / NCTC 13146 / CH001A), this protein is Small ribosomal subunit protein bS6.